The following is a 61-amino-acid chain: Small ribosomal subunit protein uS14 (61 aa).

Residues Cys24, Cys27, Cys40, and Cys43 each contribute to the Zn(2+) site.

Belongs to the universal ribosomal protein uS14 family. Zinc-binding uS14 subfamily. Part of the 30S ribosomal subunit. Contacts proteins S3 and S10. Zn(2+) serves as cofactor.

Binds 16S rRNA, required for the assembly of 30S particles and may also be responsible for determining the conformation of the 16S rRNA at the A site. The chain is Small ribosomal subunit protein uS14 from Mycoplasma pneumoniae (strain ATCC 29342 / M129 / Subtype 1) (Mycoplasmoides pneumoniae).